Reading from the N-terminus, the 203-residue chain is MNNLKQGKFITFEGGEGIGKSTQSQMLYEYLQSQNTPVILTREVGGTIVAEKMREILVHEELLPISELLQVMAARYDHMARKIIPALQEGHIVICDRFIDSTVCYQGLELENGIDLVYNLHKTLMPSLMPDITFFIDVEPDTAIKRVNSRNMNNKFDIRGIDFYKKIYYCFKELSNRFPERIKTIKASDLSPLEVHELIKKHL.

14–21 (GGEGIGKS) is a binding site for ATP.

Belongs to the thymidylate kinase family.

It catalyses the reaction dTMP + ATP = dTDP + ADP. Phosphorylation of dTMP to form dTDP in both de novo and salvage pathways of dTTP synthesis. This Rickettsia africae (strain ESF-5) protein is Thymidylate kinase.